A 538-amino-acid polypeptide reads, in one-letter code: Furcatin hydrolase (538 aa).

The N-terminal 66 residues, 1–66 (MATITTLASS…NFNKDNWLAS (66 aa)), are a transit peptide targeting the chloroplast. The disordered stretch occupies residues 18–37 (SFPGGSSRKPKKDNLSIKPP). A beta-D-glucoside contacts are provided by residues Gln88, His192, and 237–238 (NE). The active-site Proton donor is the Glu238. Cys257 and Cys260 are disulfide-bonded. A beta-D-glucoside is bound by residues Tyr376, Glu447, Trp494, 501–502 (EW), and Phe510. The active-site Nucleophile is Glu447.

Belongs to the glycosyl hydrolase 1 family. As to expression, expressed in young and mature leaves, but not in fruit and stem.

The protein resides in the plastid. It is found in the chloroplast. It carries out the reaction 7-[beta-D-apiofuranosyl-(1-&gt;6)-beta-D-glucopyranosyloxy]isoflavonoid + H2O = a 7-hydroxyisoflavonoid + beta-D-apiofuranosyl-(1-&gt;6)-D-glucose.. Disaccharide-specific acuminosidase, hydrolyzes the beta-glycosidic bond between p-allylphenol and acuminose with retention of anomeric configuration. Has highest activity towards furcatin, and lower activity towards beta-primeverosides and beta-vicianoside. Has very low activity towards beta-gentobiosides. This Viburnum furcatum (Scarlet leaved viburnum) protein is Furcatin hydrolase.